We begin with the raw amino-acid sequence, 281 residues long: Pantothenate synthetase (281 aa).

30–37 (MGNLHLGH) lines the ATP pocket. His37 serves as the catalytic Proton donor. Gln61 is a binding site for (R)-pantoate. Residue Gln61 coordinates beta-alanine. Position 149-152 (149-152 (GRKD)) interacts with ATP. Gln155 contacts (R)-pantoate. ATP-binding positions include Ile178 and 186 to 189 (MSSR).

The protein belongs to the pantothenate synthetase family. As to quaternary structure, homodimer.

It is found in the cytoplasm. The catalysed reaction is (R)-pantoate + beta-alanine + ATP = (R)-pantothenate + AMP + diphosphate + H(+). It participates in cofactor biosynthesis; (R)-pantothenate biosynthesis; (R)-pantothenate from (R)-pantoate and beta-alanine: step 1/1. Catalyzes the condensation of pantoate with beta-alanine in an ATP-dependent reaction via a pantoyl-adenylate intermediate. This chain is Pantothenate synthetase, found in Shewanella sediminis (strain HAW-EB3).